A 202-amino-acid polypeptide reads, in one-letter code: Imidazoleglycerol-phosphate dehydratase (202 aa).

Belongs to the imidazoleglycerol-phosphate dehydratase family.

The protein resides in the cytoplasm. The catalysed reaction is D-erythro-1-(imidazol-4-yl)glycerol 3-phosphate = 3-(imidazol-4-yl)-2-oxopropyl phosphate + H2O. It functions in the pathway amino-acid biosynthesis; L-histidine biosynthesis; L-histidine from 5-phospho-alpha-D-ribose 1-diphosphate: step 6/9. The sequence is that of Imidazoleglycerol-phosphate dehydratase from Acinetobacter baylyi (strain ATCC 33305 / BD413 / ADP1).